The following is a 230-amino-acid chain: Thioredoxin domain-containing protein PLP3A (230 aa).

A Thioredoxin domain is found at V89–F173. Residues L197 to D230 form a disordered region.

Belongs to the phosducin family. Interacts with TUBB2, TUBB3, TUBB4 and TUBB5. As to expression, expressed in embryos, shoot meristems, leaf primordia, root meristems, floral meristems and young floral buds.

The protein localises to the cytoplasm. It localises to the nucleus. Functionally, tubulin-binding protein involved in microtubule formation. The chain is Thioredoxin domain-containing protein PLP3A (PLP3A) from Arabidopsis thaliana (Mouse-ear cress).